Reading from the N-terminus, the 946-residue chain is Bifunctional glutamine synthetase adenylyltransferase/adenylyl-removing enzyme (946 aa).

The tract at residues 1 to 440 is adenylyl removase; it reads MKPLSSPLQQ…VFNELIGDDE (440 aa). The segment at 449–946 is adenylyl transferase; sequence SEQWRELWQD…ASWQKWLVEE (498 aa).

It belongs to the GlnE family. Mg(2+) is required as a cofactor.

It carries out the reaction [glutamine synthetase]-O(4)-(5'-adenylyl)-L-tyrosine + phosphate = [glutamine synthetase]-L-tyrosine + ADP. The catalysed reaction is [glutamine synthetase]-L-tyrosine + ATP = [glutamine synthetase]-O(4)-(5'-adenylyl)-L-tyrosine + diphosphate. In terms of biological role, involved in the regulation of glutamine synthetase GlnA, a key enzyme in the process to assimilate ammonia. When cellular nitrogen levels are high, the C-terminal adenylyl transferase (AT) inactivates GlnA by covalent transfer of an adenylyl group from ATP to specific tyrosine residue of GlnA, thus reducing its activity. Conversely, when nitrogen levels are low, the N-terminal adenylyl removase (AR) activates GlnA by removing the adenylyl group by phosphorolysis, increasing its activity. The regulatory region of GlnE binds the signal transduction protein PII (GlnB) which indicates the nitrogen status of the cell. This Escherichia coli O127:H6 (strain E2348/69 / EPEC) protein is Bifunctional glutamine synthetase adenylyltransferase/adenylyl-removing enzyme.